We begin with the raw amino-acid sequence, 660 residues long: DNA ligase (660 aa).

NAD(+)-binding positions include 33–37 (DFVYD), 82–83 (SL), and glutamate 110. Lysine 112 (N6-AMP-lysine intermediate) is an active-site residue. NAD(+)-binding residues include arginine 133, glutamate 167, lysine 281, and lysine 305. Positions 396, 399, 412, and 417 each coordinate Zn(2+). In terms of domain architecture, BRCT spans 583-660 (DENKLLVGKK…SFEDIKSYLD (78 aa)).

It belongs to the NAD-dependent DNA ligase family. LigA subfamily. Mg(2+) serves as cofactor. The cofactor is Mn(2+).

The catalysed reaction is NAD(+) + (deoxyribonucleotide)n-3'-hydroxyl + 5'-phospho-(deoxyribonucleotide)m = (deoxyribonucleotide)n+m + AMP + beta-nicotinamide D-nucleotide.. DNA ligase that catalyzes the formation of phosphodiester linkages between 5'-phosphoryl and 3'-hydroxyl groups in double-stranded DNA using NAD as a coenzyme and as the energy source for the reaction. It is essential for DNA replication and repair of damaged DNA. This Borreliella afzelii (strain PKo) (Borrelia afzelii) protein is DNA ligase.